A 1073-amino-acid polypeptide reads, in one-letter code: Receptor-type guanylate cyclase gcy-23 (1073 aa).

A signal peptide spans 1 to 15 (MRRELFIFLLLLGEC). Topologically, residues 16 to 458 (ANVKVKVGHI…FRNEKCDYTT (443 aa)) are extracellular. Residue N336 is glycosylated (N-linked (GlcNAc...) asparagine). Residues 459 to 479 (LIIGGCIVLLIILLIICFFIL) form a helical membrane-spanning segment. The Cytoplasmic portion of the chain corresponds to 480–1073 (SRVCENRALA…QQQNFSQLGI (594 aa)). The Protein kinase domain occupies 508-808 (MKSMLSIGSS…RVRLNTENYL (301 aa)). A coiled-coil region spans residues 813-844 (SLVDQMMRMMEQYANNLEKLVAERTGMLEEAN). The Guanylate cyclase domain occupies 878–1008 (TVMFSDIVGF…DTVNVASRME (131 aa)). Residues D883, I884, and D927 each contribute to the Mg(2+) site.

This sequence belongs to the adenylyl cyclase class-4/guanylyl cyclase family. Expressed specifically in AFD sensory neurons.

Its subcellular location is the cell membrane. The protein resides in the cell projection. It localises to the cilium. The enzyme catalyses GTP = 3',5'-cyclic GMP + diphosphate. In terms of biological role, guanylate cyclase involved in the production of the second messenger cGMP. Regulates thermotaxis responses in AFD sensory neurons. May regulate AFD neuronal activity such as calcium responses to temperature gradients. This Caenorhabditis elegans protein is Receptor-type guanylate cyclase gcy-23.